A 37-amino-acid chain; its full sequence is Large ribosomal subunit protein bL36 (37 aa).

The protein belongs to the bacterial ribosomal protein bL36 family.

The chain is Large ribosomal subunit protein bL36 from Synechococcus sp. (strain CC9311).